The sequence spans 419 residues: Histidine--tRNA ligase (419 aa).

This sequence belongs to the class-II aminoacyl-tRNA synthetase family. Homodimer.

The protein localises to the cytoplasm. It catalyses the reaction tRNA(His) + L-histidine + ATP = L-histidyl-tRNA(His) + AMP + diphosphate + H(+). The polypeptide is Histidine--tRNA ligase (Halothermothrix orenii (strain H 168 / OCM 544 / DSM 9562)).